Reading from the N-terminus, the 356-residue chain is Histidinol-phosphate aminotransferase (356 aa).

Lys-214 is modified (N6-(pyridoxal phosphate)lysine).

This sequence belongs to the class-II pyridoxal-phosphate-dependent aminotransferase family. Histidinol-phosphate aminotransferase subfamily. Homodimer. The cofactor is pyridoxal 5'-phosphate.

The enzyme catalyses L-histidinol phosphate + 2-oxoglutarate = 3-(imidazol-4-yl)-2-oxopropyl phosphate + L-glutamate. It functions in the pathway amino-acid biosynthesis; L-histidine biosynthesis; L-histidine from 5-phospho-alpha-D-ribose 1-diphosphate: step 7/9. This chain is Histidinol-phosphate aminotransferase, found in Aromatoleum aromaticum (strain DSM 19018 / LMG 30748 / EbN1) (Azoarcus sp. (strain EbN1)).